Reading from the N-terminus, the 279-residue chain is Biotin synthase (279 aa).

The region spanning 2–232 (VRNSRLDICS…NVTIKIAAGR (231 aa)) is the Radical SAM core domain. 3 residues coordinate [4Fe-4S] cluster: Cys-20, Cys-24, and Cys-27. The [2Fe-2S] cluster site is built by Cys-96, Cys-156, and Lys-227.

Belongs to the radical SAM superfamily. Biotin synthase family. In terms of assembly, homodimer. [4Fe-4S] cluster serves as cofactor. Requires [2Fe-2S] cluster as cofactor.

The catalysed reaction is (4R,5S)-dethiobiotin + (sulfur carrier)-SH + 2 reduced [2Fe-2S]-[ferredoxin] + 2 S-adenosyl-L-methionine = (sulfur carrier)-H + biotin + 2 5'-deoxyadenosine + 2 L-methionine + 2 oxidized [2Fe-2S]-[ferredoxin]. It functions in the pathway cofactor biosynthesis; biotin biosynthesis; biotin from 7,8-diaminononanoate: step 2/2. Functionally, catalyzes the conversion of dethiobiotin (DTB) to biotin by the insertion of a sulfur atom into dethiobiotin via a radical-based mechanism. This Thermotoga neapolitana (strain ATCC 49049 / DSM 4359 / NBRC 107923 / NS-E) protein is Biotin synthase.